The primary structure comprises 98 residues: Co-chaperonin GroES 5 (98 aa).

Belongs to the GroES chaperonin family. As to quaternary structure, heptamer of 7 subunits arranged in a ring. Interacts with the chaperonin GroEL.

The protein resides in the cytoplasm. Together with the chaperonin GroEL, plays an essential role in assisting protein folding. The GroEL-GroES system forms a nano-cage that allows encapsulation of the non-native substrate proteins and provides a physical environment optimized to promote and accelerate protein folding. GroES binds to the apical surface of the GroEL ring, thereby capping the opening of the GroEL channel. The chain is Co-chaperonin GroES 5 from Mesorhizobium japonicum (strain LMG 29417 / CECT 9101 / MAFF 303099) (Mesorhizobium loti (strain MAFF 303099)).